Reading from the N-terminus, the 806-residue chain is MADDGMLLNFEIGDAPLKSQVKFKGGRWRDRLKAQRSAKQSHEDGPSSTPPRNRTTVGGYDAGRLGKRPRTEDGESHRYAKVPRTSDAAPKAPSHAMKTGQISSSLFTSNPSAVTDFDQPPAEEEAEPAKASNAPLSEEAENFHSLGVSRRVAQHLATKLEMKAPTAIQKNTVPQLINGDSDAFLQAETGSGKTLAYLLPIVHRIMSLSLNEDGTPKDTKVHRNSGLFAIIMAPTRELCKQISVVLEKVLRCAPWLVCTTVIGGESKKSEKARIRKGVNILIATPGRLADHLDNTKVLNVGTVRWLVLDEGDRMMEMGFEDDIKTIVGKIRADKLEKVNAEGVVLDGVLPSRRVTVLCSATMKMNVQKLGEISLEDAIHIMAAKSESDGDADAVFAAPSQLKQSCIVTPAKLRLVTLIALLKSTFARRGSVMKAIIFISCADSVDFHYQLLKDTKAVEPPTPDSSSTKDRNPHTDTTVARAAYITSPANPKVMLHKLHGSLAQPVRSATLNAFSACKDPAVLITTDISSRGLDVPAVDLVIEYDPAFAVPDHVHRIGRTARAGRAGKAVLFLLPGCEEGYTTILNSSTPIAPQLYESILQKGLASVVNLPSTHTTSETDKQTWSTRAEALQLHLEQRLLANPAGADDDADDNPNPFRGNKGNHNNNTKPKSKQYKPKIDNPLLDAARQAFRSHIRAYATHVREERVYFDILQLHLGHLAKAFALREPPGGIGGGVARRTHTAANKAAAERKSKVSGGGGGGGRVGFGRGAADDDGDGVGAVDEDAARRMREKMRMVMNASSEFNIG.

The disordered stretch occupies residues 24-135 (KGGRWRDRLK…AEPAKASNAP (112 aa)). The segment covering 46–56 (PSSTPPRNRTT) has biased composition (polar residues). The segment covering 69–78 (PRTEDGESHR) has biased composition (basic and acidic residues). A compositionally biased stretch (polar residues) spans 100-113 (GQISSSLFTSNPSA). Residues 141-170 (ENFHSLGVSRRVAQHLATKLEMKAPTAIQK) carry the Q motif motif. The Helicase ATP-binding domain occupies 174–380 (PQLINGDSDA…EISLEDAIHI (207 aa)). Residue 187–194 (AETGSGKT) participates in ATP binding. The short motif at 309 to 312 (DEGD) is the DEAD box element. The Helicase C-terminal domain occupies 413–611 (RLVTLIALLK…GLASVVNLPS (199 aa)). Disordered stretches follow at residues 642-677 (PAGA…YKPK) and 741-784 (TAAN…VDED). Positions 755–768 (SGGGGGGGRVGFGR) are enriched in gly residues.

The protein belongs to the DEAD box helicase family. DDX31/DBP7 subfamily.

Its subcellular location is the nucleus. It is found in the nucleolus. It catalyses the reaction ATP + H2O = ADP + phosphate + H(+). Functionally, ATP-binding RNA helicase involved in the biogenesis of 60S ribosomal subunits and is required for the normal formation of 25S and 5.8S rRNAs. This chain is ATP-dependent RNA helicase DBP7 (DBP7), found in Chaetomium globosum (strain ATCC 6205 / CBS 148.51 / DSM 1962 / NBRC 6347 / NRRL 1970) (Soil fungus).